Consider the following 142-residue polypeptide: Transcription antitermination protein NusB (142 aa).

It belongs to the NusB family.

Its function is as follows. Involved in transcription antitermination. Required for transcription of ribosomal RNA (rRNA) genes. Binds specifically to the boxA antiterminator sequence of the ribosomal RNA (rrn) operons. The protein is Transcription antitermination protein NusB of Trichlorobacter lovleyi (strain ATCC BAA-1151 / DSM 17278 / SZ) (Geobacter lovleyi).